The sequence spans 277 residues: Inositol monophosphatase 1 (277 aa).

4 residues coordinate Mg(2+): glutamate 70, aspartate 90, isoleucine 92, and aspartate 93. Glutamate 70 contacts substrate. A substrate-binding site is contributed by 92 to 95 (IDGT). Position 168 is a phosphothreonine (threonine 168). Residues 194–196 (GTA), glutamate 213, and aspartate 220 contribute to the substrate site. Aspartate 220 is a binding site for Mg(2+).

Belongs to the inositol monophosphatase superfamily. As to quaternary structure, homodimer. Mg(2+) serves as cofactor. The N-terminus is blocked.

It localises to the cytoplasm. It carries out the reaction a myo-inositol phosphate + H2O = myo-inositol + phosphate. The catalysed reaction is 1D-myo-inositol 1-phosphate + H2O = myo-inositol + phosphate. It catalyses the reaction 1D-myo-inositol 2-phosphate + H2O = myo-inositol + phosphate. The enzyme catalyses 1D-myo-inositol 3-phosphate + H2O = myo-inositol + phosphate. It carries out the reaction 1D-myo-inositol 4-phosphate + H2O = myo-inositol + phosphate. The catalysed reaction is 1D-myo-inositol 5-phosphate + H2O = myo-inositol + phosphate. It catalyses the reaction 1D-myo-inositol 6-phosphate + H2O = myo-inositol + phosphate. The enzyme catalyses scyllo-inositol 1-phosphate + H2O = scyllo-inositol + phosphate. It carries out the reaction alpha-D-galactose 1-phosphate + H2O = D-galactose + phosphate. The catalysed reaction is alpha-D-glucose 1-phosphate + H2O = D-glucose + phosphate. It catalyses the reaction D-glucose 6-phosphate + H2O = D-glucose + phosphate. The enzyme catalyses beta-D-fructose 1-phosphate + H2O = D-fructose + phosphate. It carries out the reaction glycerol 2-phosphate + H2O = glycerol + phosphate. The catalysed reaction is adenosine 2'-phosphate + H2O = adenosine + phosphate. It participates in polyol metabolism; myo-inositol biosynthesis; myo-inositol from D-glucose 6-phosphate: step 2/2. Its activity is regulated as follows. Activity with myo-inositol monophosphate and D-galactose 1-phosphate is inhibited by Li(+), Ca(2+) and Mn(2+), but also by Mg(2+) at concentrations above 3 mM. Phosphatase involved in the dephosphorylation of myo-inositol monophosphate to generate myo-inositol. Is also able to dephosphorylate scyllo-inositol-phosphate, myo-inositol 1,4-diphosphate, scyllo-inositol-1,3-diphosphate and scyllo-inositol-1,4-diphosphate. Also dephosphorylates in vitro other sugar-phosphates including D-galactose-1-phosphate, glucose-1-phosphate, glucose-6-phosphate, fructose-1-phosphate, beta-glycerophosphate and 2'-AMP. Responsible for the provision of inositol required for synthesis of phosphatidylinositol and polyphosphoinositides, and involved in maintaining normal brain function. Has been implicated as the pharmacological target for lithium Li(+) action in brain. Is equally active with myo-inositol monophosphate and D-galactose 1-phosphate. This Bos taurus (Bovine) protein is Inositol monophosphatase 1 (IMPA1).